Reading from the N-terminus, the 471-residue chain is Uronate isomerase (471 aa).

The protein belongs to the metallo-dependent hydrolases superfamily. Uronate isomerase family.

It catalyses the reaction D-glucuronate = D-fructuronate. The enzyme catalyses aldehydo-D-galacturonate = keto-D-tagaturonate. Its pathway is carbohydrate metabolism; pentose and glucuronate interconversion. In Xanthomonas campestris pv. campestris (strain 8004), this protein is Uronate isomerase.